The sequence spans 568 residues: 2-isopropylmalate synthase (568 aa).

Residues 37-313 form the Pyruvate carboxyltransferase domain; the sequence is PRWLSTDLRD…DPMIDFSNID (277 aa). Mg(2+) is bound by residues aspartate 46, histidine 252, histidine 254, and asparagine 288. The interval 455–568 is regulatory domain; sequence EGVVGVMAYR…CSAVNRAQQS (114 aa).

Belongs to the alpha-IPM synthase/homocitrate synthase family. LeuA type 2 subfamily. In terms of assembly, homodimer. Mg(2+) is required as a cofactor.

It localises to the cytoplasm. It carries out the reaction 3-methyl-2-oxobutanoate + acetyl-CoA + H2O = (2S)-2-isopropylmalate + CoA + H(+). Its pathway is amino-acid biosynthesis; L-leucine biosynthesis; L-leucine from 3-methyl-2-oxobutanoate: step 1/4. Catalyzes the condensation of the acetyl group of acetyl-CoA with 3-methyl-2-oxobutanoate (2-ketoisovalerate) to form 3-carboxy-3-hydroxy-4-methylpentanoate (2-isopropylmalate). This Thermobifida fusca (strain YX) protein is 2-isopropylmalate synthase.